The following is a 147-amino-acid chain: Large ribosomal subunit protein uL13 (147 aa).

This sequence belongs to the universal ribosomal protein uL13 family. In terms of assembly, part of the 50S ribosomal subunit.

In terms of biological role, this protein is one of the early assembly proteins of the 50S ribosomal subunit, although it is not seen to bind rRNA by itself. It is important during the early stages of 50S assembly. This is Large ribosomal subunit protein uL13 from Deinococcus geothermalis (strain DSM 11300 / CIP 105573 / AG-3a).